Reading from the N-terminus, the 141-residue chain is Large ribosomal subunit protein uL11 (141 aa).

Belongs to the universal ribosomal protein uL11 family. Part of the ribosomal stalk of the 50S ribosomal subunit. Interacts with L10 and the large rRNA to form the base of the stalk. L10 forms an elongated spine to which L12 dimers bind in a sequential fashion forming a multimeric L10(L12)X complex. Post-translationally, one or more lysine residues are methylated.

Forms part of the ribosomal stalk which helps the ribosome interact with GTP-bound translation factors. The sequence is that of Large ribosomal subunit protein uL11 from Picosynechococcus sp. (strain ATCC 27264 / PCC 7002 / PR-6) (Agmenellum quadruplicatum).